Reading from the N-terminus, the 489-residue chain is Hydantoin permease (489 aa).

The next 12 helical transmembrane spans lie at 30 to 50, 58 to 78, 104 to 124, 144 to 164, 167 to 187, 207 to 227, 258 to 278, 299 to 321, 339 to 359, 362 to 382, 405 to 424, and 428 to 445; these read FSLA…IAAG, VWQV…LLFF, LIPI…QTWL, LWIV…ITFI, MNVF…YLML, MPFS…VVSI, LGMV…MVLV, AILF…NLLS, GVIV…AGVL, FLNL…SDYF, RGVN…VSFL, and LMFV…IPAM. Na(+) is bound by residues alanine 38 and isoleucine 41. Glutamine 121 contributes to the substrate binding site. Substrate is bound at residue glycine 219. Positions 309, 312, and 313 each coordinate Na(+). Asparagine 318 is a binding site for substrate. Positions 468–489 are disordered; it reads PIGPVAPADESATANTKEQNQR. The span at 479–489 shows a compositional bias: polar residues; sequence ATANTKEQNQR.

Belongs to the purine-cytosine permease (2.A.39) family.

It localises to the membrane. With respect to regulation, inhibited by dinitrophenol, 5-(2-naphthylmethyl)-D-hydantoin (D-NMH), 5-(2-naphthylmethyl)-L-hydantoin (L-NMH), 5-bromovinylhydantoin (BVH) and 5-indolylmethyl-L-hydantoin (L-IMH). The affinity of benzyl-hydantoin is increased over 10-fold in the presence of 15 mM of sodium. Its function is as follows. Nucleobase-proton symporter that mediates the sodium-dependent binding and uptake of 5-aryl-substituted hydantoin compounds. 5-indolyl methyl hydantoin and 5-benzyl hydantoin are the preferred substrates, with selectivity for a hydrophobic substituent in position 5 of hydantoin and for the L isomer over the D isomer. This is Hydantoin permease from Microbacterium maritypicum (Microbacterium liquefaciens).